A 141-amino-acid chain; its full sequence is Hemoglobin subunit alpha (141 aa).

The region spanning 1–141 (VLSPDDKKHV…VSTVLTSKYR (141 aa)) is the Globin domain. S3 is subject to Phosphoserine. N6-succinyllysine is present on residues K7 and K11. K16 bears the N6-acetyllysine; alternate mark. Position 16 is an N6-succinyllysine; alternate (K16). Phosphotyrosine is present on Y24. S35 bears the Phosphoserine mark. K40 bears the N6-succinyllysine mark. S49 bears the Phosphoserine mark. H58 lines the O2 pocket. Residue H87 coordinates heme b. The residue at position 102 (S102) is a Phosphoserine. Position 108 is a phosphothreonine (T108). A phosphoserine mark is found at S124 and S131. Residues T134 and T137 each carry the phosphothreonine modification. S138 carries the phosphoserine modification.

It belongs to the globin family. As to quaternary structure, heterotetramer of two alpha chains and two beta chains. Red blood cells.

Functionally, involved in oxygen transport from the lung to the various peripheral tissues. In terms of biological role, hemopressin acts as an antagonist peptide of the cannabinoid receptor CNR1. Hemopressin-binding efficiently blocks cannabinoid receptor CNR1 and subsequent signaling. This Theropithecus gelada (Gelada baboon) protein is Hemoglobin subunit alpha (HBA).